A 75-amino-acid polypeptide reads, in one-letter code: Small ribosomal subunit protein bS18 (75 aa).

This sequence belongs to the bacterial ribosomal protein bS18 family. As to quaternary structure, part of the 30S ribosomal subunit. Forms a tight heterodimer with protein bS6.

In terms of biological role, binds as a heterodimer with protein bS6 to the central domain of the 16S rRNA, where it helps stabilize the platform of the 30S subunit. The sequence is that of Small ribosomal subunit protein bS18 from Idiomarina loihiensis (strain ATCC BAA-735 / DSM 15497 / L2-TR).